Consider the following 299-residue polypeptide: Coenzyme PQQ synthesis protein B (299 aa).

This sequence belongs to the PqqB family.

It functions in the pathway cofactor biosynthesis; pyrroloquinoline quinone biosynthesis. Its function is as follows. May be involved in the transport of PQQ or its precursor to the periplasm. The polypeptide is Coenzyme PQQ synthesis protein B (Methylorubrum extorquens (strain CM4 / NCIMB 13688) (Methylobacterium extorquens)).